A 391-amino-acid chain; its full sequence is Formate-dependent phosphoribosylglycinamide formyltransferase (391 aa).

N(1)-(5-phospho-beta-D-ribosyl)glycinamide-binding positions include 20 to 21 (EL) and E80. ATP is bound by residues R112, K153, 158–163 (SSGKGQ), 193–196 (EGFV), and E201. An ATP-grasp domain is found at 117 to 306 (RLAAEELGLP…EFALHVRAFT (190 aa)). E265 and E277 together coordinate Mg(2+). N(1)-(5-phospho-beta-D-ribosyl)glycinamide contacts are provided by residues D284, K354, and 361–362 (RR).

The protein belongs to the PurK/PurT family. As to quaternary structure, homodimer.

The enzyme catalyses N(1)-(5-phospho-beta-D-ribosyl)glycinamide + formate + ATP = N(2)-formyl-N(1)-(5-phospho-beta-D-ribosyl)glycinamide + ADP + phosphate + H(+). It participates in purine metabolism; IMP biosynthesis via de novo pathway; N(2)-formyl-N(1)-(5-phospho-D-ribosyl)glycinamide from N(1)-(5-phospho-D-ribosyl)glycinamide (formate route): step 1/1. Functionally, involved in the de novo purine biosynthesis. Catalyzes the transfer of formate to 5-phospho-ribosyl-glycinamide (GAR), producing 5-phospho-ribosyl-N-formylglycinamide (FGAR). Formate is provided by PurU via hydrolysis of 10-formyl-tetrahydrofolate. The protein is Formate-dependent phosphoribosylglycinamide formyltransferase of Vibrio cholerae serotype O1 (strain ATCC 39315 / El Tor Inaba N16961).